The primary structure comprises 351 residues: Peptide chain release factor 1 (351 aa).

Gln229 bears the N5-methylglutamine mark.

Belongs to the prokaryotic/mitochondrial release factor family. In terms of processing, methylated by PrmC. Methylation increases the termination efficiency of RF1.

It is found in the cytoplasm. In terms of biological role, peptide chain release factor 1 directs the termination of translation in response to the peptide chain termination codons UAG and UAA. This chain is Peptide chain release factor 1, found in Cereibacter sphaeroides (strain KD131 / KCTC 12085) (Rhodobacter sphaeroides).